Consider the following 391-residue polypeptide: Putative ABC transporter glucose-binding protein TsgA13 (391 aa).

The N-terminal stretch at 1-28 (MLDEESSIQRRDVLSALGAAGVTTLAGC) is a signal peptide. Residues 24 to 71 (TLAGCTGGDTGDTDDTEASETTASEGTTSGTTTGDVETTDGGGPSEGE) are disordered. A compositionally biased stretch (low complexity) spans 42–59 (SETTASEGTTSGTTTGDV).

This sequence belongs to the BMP lipoprotein family. As to quaternary structure, the complex is composed of two ATP-binding proteins (TsgD13), two transmembrane proteins (TsgB13 and TsgC13) and a solute-binding protein (TsgA13).

In terms of biological role, part of an ABC transporter complex involved in glucose import. This is Putative ABC transporter glucose-binding protein TsgA13 (tsgA13) from Haloferax volcanii (strain ATCC 29605 / DSM 3757 / JCM 8879 / NBRC 14742 / NCIMB 2012 / VKM B-1768 / DS2) (Halobacterium volcanii).